A 492-amino-acid polypeptide reads, in one-letter code: Glutamyl-tRNA(Gln) amidotransferase subunit A (492 aa).

Residues lysine 78 and serine 158 each act as charge relay system in the active site. Serine 182 serves as the catalytic Acyl-ester intermediate.

The protein belongs to the amidase family. GatA subfamily. In terms of assembly, heterotrimer of A, B and C subunits.

It carries out the reaction L-glutamyl-tRNA(Gln) + L-glutamine + ATP + H2O = L-glutaminyl-tRNA(Gln) + L-glutamate + ADP + phosphate + H(+). Its function is as follows. Allows the formation of correctly charged Gln-tRNA(Gln) through the transamidation of misacylated Glu-tRNA(Gln) in organisms which lack glutaminyl-tRNA synthetase. The reaction takes place in the presence of glutamine and ATP through an activated gamma-phospho-Glu-tRNA(Gln). The protein is Glutamyl-tRNA(Gln) amidotransferase subunit A of Orientia tsutsugamushi (strain Ikeda) (Rickettsia tsutsugamushi).